The sequence spans 130 residues: Sigma-w pathway protein YsdB (130 aa).

The chain crosses the membrane as a helical span at residues 2–22 (FVMVLRIILLALFAYCIYAVV).

It localises to the membrane. May mediate a negative feedback loop that down-regulates the expression of the sigma-W regulon following the activation of sigma-W in response to conditions of cell envelope stress. Might interact with and inhibit the activity of the protease PrsW, or could bind to the anti-sigma-W factor RsiW and thereby protect it from PrsW-mediated cleavage. In Bacillus subtilis (strain 168), this protein is Sigma-w pathway protein YsdB (ysdB).